Here is a 629-residue protein sequence, read N- to C-terminus: LEAF RUST 10 DISEASE-RESISTANCE LOCUS RECEPTOR-LIKE PROTEIN KINASE-like 1.1 (629 aa).

The N-terminal stretch at 1–19 (METVSVLLFFFLFLLAAEA) is a signal peptide. Residues 20-225 (RSTKRTGCKD…PNNYHAEMRL (206 aa)) lie on the Extracellular side of the membrane. N-linked (GlcNAc...) asparagine glycans are attached at residues N56, N92, N123, N124, N172, and N177. A helical membrane pass occupies residues 226 to 246 (GLGIGGSVILIIILVALFAVI). The Cytoplasmic segment spans residues 247–629 (HRNYRRKDGS…TTPNTSAYEF (383 aa)). Positions 291 to 565 (FSKDRLLGDG…TMEQVVHELK (275 aa)) constitute a Protein kinase domain. ATP contacts are provided by residues 297 to 305 (LGDGGFGTV) and K319. Phosphotyrosine is present on Y365. The active-site Proton acceptor is D416. The residue at position 449 (S449) is a Phosphoserine. A phosphothreonine mark is found at T450 and T455. Y463 carries the phosphotyrosine modification. The tract at residues 609–629 (VSVTDQWTSKSTTPNTSAYEF) is disordered.

Belongs to the protein kinase superfamily. Ser/Thr protein kinase family.

It is found in the cell membrane. It carries out the reaction L-seryl-[protein] + ATP = O-phospho-L-seryl-[protein] + ADP + H(+). It catalyses the reaction L-threonyl-[protein] + ATP = O-phospho-L-threonyl-[protein] + ADP + H(+). The sequence is that of LEAF RUST 10 DISEASE-RESISTANCE LOCUS RECEPTOR-LIKE PROTEIN KINASE-like 1.1 from Arabidopsis thaliana (Mouse-ear cress).